We begin with the raw amino-acid sequence, 531 residues long: T-complex protein 1 subunit zeta (531 aa).

The residue at position 2 (alanine 2) is an N-acetylalanine. The residue at position 5 (lysine 5) is an N6-acetyllysine. Glycine 39 contacts ADP. Glycine 39 contacts ATP. Aspartate 90 is a Mg(2+) binding site. ADP is bound by residues glycine 91, threonine 92, threonine 93, serine 94, threonine 158, and lysine 159. 3 residues coordinate ATP: glycine 91, threonine 92, and threonine 93. Lysine 199 is modified (N6-acetyllysine). Phosphoserine is present on serine 205. Residue lysine 251 forms a Glycyl lysine isopeptide (Lys-Gly) (interchain with G-Cter in SUMO2) linkage. N6-acetyllysine is present on residues lysine 287, lysine 365, lysine 377, and lysine 388. ADP is bound at residue alanine 411. Residues alanine 411, glycine 412, aspartate 496, and lysine 501 each contribute to the ATP site. Aspartate 496 provides a ligand contact to ADP.

It belongs to the TCP-1 chaperonin family. Component of the chaperonin-containing T-complex (TRiC), a hexadecamer composed of two identical back-to-back stacked rings enclosing a protein folding chamber. Each ring is made up of eight different subunits: TCP1/CCT1, CCT2, CCT3, CCT4, CCT5, CCT6A/CCT6, CCT7, CCT8. Interacts with PACRG.

It localises to the cytoplasm. The enzyme catalyses ATP + H2O = ADP + phosphate + H(+). Its function is as follows. Component of the chaperonin-containing T-complex (TRiC), a molecular chaperone complex that assists the folding of actin, tubulin and other proteins upon ATP hydrolysis. The TRiC complex mediates the folding of WRAP53/TCAB1, thereby regulating telomere maintenance. This chain is T-complex protein 1 subunit zeta (CCT6), found in Oryctolagus cuniculus (Rabbit).